The primary structure comprises 92 residues: Acylphosphatase (92 aa).

The region spanning 5-92 (CIAAYVYGVV…TPFETFKIRY (88 aa)) is the Acylphosphatase-like domain. Active-site residues include R20 and N38.

The protein belongs to the acylphosphatase family.

The catalysed reaction is an acyl phosphate + H2O = a carboxylate + phosphate + H(+). The protein is Acylphosphatase (acyP) of Yersinia enterocolitica serotype O:8 / biotype 1B (strain NCTC 13174 / 8081).